Reading from the N-terminus, the 62-residue chain is Photosystem II reaction center protein Z (62 aa).

2 consecutive transmembrane segments (helical) span residues 8-28 (ALFA…VAFA) and 41-61 (FQGV…NSLV).

This sequence belongs to the PsbZ family. In terms of assembly, PSII is composed of 1 copy each of membrane proteins PsbA, PsbB, PsbC, PsbD, PsbE, PsbF, PsbH, PsbI, PsbJ, PsbK, PsbL, PsbM, PsbT, PsbY, PsbZ, Psb30/Ycf12, at least 3 peripheral proteins of the oxygen-evolving complex and a large number of cofactors. It forms dimeric complexes.

The protein resides in the plastid. The protein localises to the chloroplast thylakoid membrane. May control the interaction of photosystem II (PSII) cores with the light-harvesting antenna, regulates electron flow through the 2 photosystem reaction centers. PSII is a light-driven water plastoquinone oxidoreductase, using light energy to abstract electrons from H(2)O, generating a proton gradient subsequently used for ATP formation. The chain is Photosystem II reaction center protein Z from Nephroselmis olivacea (Green alga).